A 482-amino-acid chain; its full sequence is Anaerobic nitric oxide reductase flavorubredoxin (482 aa).

Residues 30–210 (LRGSSYNSYL…PFSRLVTPKI (181 aa)) form a zinc metallo-hydrolase region. Residues His-79, Glu-81, Asp-83, His-147, Asp-166, and His-227 each contribute to the Fe cation site. Residues 254-393 (ITIFYDTMSN…LCRQHGRDIA (140 aa)) enclose the Flavodoxin-like domain. Residues 260–264 (TMSNN) and 342–369 (AFGS…EMSL) each bind FMN. Residues 426–477 (GPSMQCSVCQWIYDPAKGEPLQDVAPGTPWSDVPDNFLCPECSLGKDVFDVL) form the Rubredoxin-like domain. Fe cation-binding residues include Cys-431, Cys-434, Cys-464, and Cys-467.

This sequence in the N-terminal section; belongs to the zinc metallo-hydrolase group 3 family. As to quaternary structure, homotetramer. Requires Fe cation as cofactor. FMN is required as a cofactor.

It localises to the cytoplasm. Its pathway is nitrogen metabolism; nitric oxide reduction. Anaerobic nitric oxide reductase; uses NADH to detoxify nitric oxide (NO), protecting several 4Fe-4S NO-sensitive enzymes. Has at least 2 reductase partners, only one of which (NorW, flavorubredoxin reductase) has been identified. NO probably binds to the di-iron center; electrons enter from the NorW at rubredoxin and are transferred sequentially to the FMN center and the di-iron center. Also able to function as an aerobic oxygen reductase. In Citrobacter koseri (strain ATCC BAA-895 / CDC 4225-83 / SGSC4696), this protein is Anaerobic nitric oxide reductase flavorubredoxin.